A 68-amino-acid chain; its full sequence is Conotoxin Lp5.2 (68 aa).

Residues Met1–Pro19 form the signal peptide. The propeptide occupies Lys20 to Ala54.

Belongs to the conotoxin T superfamily. Contains 2 disulfide bonds that can be either 'C1-C3, C2-C4' or 'C1-C4, C2-C3', since these disulfide connectivities have been observed for conotoxins with cysteine framework V (for examples, see AC P0DQQ7 and AC P81755). As to expression, expressed by the venom duct.

The protein localises to the secreted. The protein is Conotoxin Lp5.2 of Conus leopardus (Leopard cone).